Here is a 214-residue protein sequence, read N- to C-terminus: Ribonuclease HII (214 aa).

The RNase H type-2 domain occupies 26–214; that stretch reads EIVCGVDEAG…PVREAFDLIR (189 aa). Residues Asp-32, Glu-33, and Asp-124 each contribute to the a divalent metal cation site.

Belongs to the RNase HII family. It depends on Mn(2+) as a cofactor. The cofactor is Mg(2+).

Its subcellular location is the cytoplasm. It catalyses the reaction Endonucleolytic cleavage to 5'-phosphomonoester.. Functionally, endonuclease that specifically degrades the RNA of RNA-DNA hybrids. This is Ribonuclease HII from Burkholderia thailandensis (strain ATCC 700388 / DSM 13276 / CCUG 48851 / CIP 106301 / E264).